We begin with the raw amino-acid sequence, 557 residues long: Nucleoprotein (557 aa).

Positions 54-235 are binding site for the cap structure m7GTP; that stretch reads MRKDKRSDDD…ITKEESANNI (182 aa). Residues aspartate 379 and glutamate 381 each coordinate Mn(2+). Zn(2+) is bound by residues glutamate 389, cysteine 496, histidine 499, and cysteine 518. A Mn(2+)-binding site is contributed by aspartate 522.

The protein belongs to the arenaviridae nucleocapsid protein family. In terms of assembly, homomultimerizes to form the nucleocapsid. Binds to viral genomic RNA. Interacts with glycoprotein G2. Interacts with protein Z; this interaction probably directs the encapsidated genome to budding sites. Interacts with protein L; this interaction does not interfere with Z-L interaction. Interacts with host IKBKE (via Protein kinase domain); the interaction inhibits IKBKE kinase activity.

The protein resides in the virion. Its subcellular location is the host cytoplasm. Functionally, encapsidates the genome, protecting it from nucleases. The encapsidated genomic RNA is termed the nucleocapsid (NC). Serves as template for viral transcription and replication. The increased presence of protein N in host cell does not seem to trigger the switch from transcription to replication as observed in other negative strain RNA viruses. Through the interaction with host IKBKE, strongly inhibits the phosphorylation and nuclear translocation of host IRF3, a protein involved in interferon activation pathway, leading to the inhibition of interferon-beta and IRF3-dependent promoters activation. Also encodes a functional 3'-5' exoribonuclease that degrades preferentially dsRNA substrates and thereby participates in the suppression of interferon induction. This is Nucleoprotein from Calomys callosus (Large vesper mouse).